Consider the following 401-residue polypeptide: Glycerol-3-phosphate dehydrogenase [NAD(+)] 1 (401 aa).

NAD(+) is bound by residues 40–45 (GSGNWG), F128, K151, and A184. Residue K151 coordinates substrate. K244 serves as the catalytic Proton acceptor. NAD(+) contacts are provided by R309 and Q338. Residue 309–310 (RN) participates in substrate binding.

This sequence belongs to the NAD-dependent glycerol-3-phosphate dehydrogenase family.

Its subcellular location is the cytoplasm. The enzyme catalyses sn-glycerol 3-phosphate + NAD(+) = dihydroxyacetone phosphate + NADH + H(+). The chain is Glycerol-3-phosphate dehydrogenase [NAD(+)] 1 (GPD1) from Zygosaccharomyces rouxii.